Consider the following 852-residue polypeptide: Bifunctional isopimaradiene synthase, chloroplastic (852 aa).

The N-terminal 53 residues, 1–53 (HHLTANTQSIPHFSTTLNAGSSARKRRSLYLRWGKGSNKIIACVGEGATSVPY), are a transit peptide targeting the chloroplast. Lys-252 serves as a coordination point for substrate. Mg(2+)-binding residues include Asp-385 and Asp-387. The DXDD motif signature appears at 385–388 (DIDD). Lys-472 is a substrate binding site. 5 residues coordinate Mg(2+): Asp-604, Asp-608, Asn-748, Thr-752, and Glu-756. Residues 604–608 (DDLYD) carry the DDXXD motif motif.

It belongs to the terpene synthase family. Tpsd subfamily. The cofactor is Mg(2+).

The protein resides in the plastid. Its subcellular location is the chloroplast. It carries out the reaction (2E,6E,10E)-geranylgeranyl diphosphate = (+)-copalyl diphosphate. The catalysed reaction is (+)-copalyl diphosphate = isopimara-7,15-diene + diphosphate. It functions in the pathway terpene metabolism; oleoresin biosynthesis. In terms of biological role, involved in defensive oleoresin formation in conifers in response to insect attack or other injury. Involved in diterpene (C20) olefins biosynthesis. Bifunctional enzyme that catalyzes two sequential cyclizations of geranylgeranyl diphosphate (GGPP) to isopimara-7,15-diene. This is Bifunctional isopimaradiene synthase, chloroplastic (TPS-ISO) from Abies balsamea (Balsam fir).